Consider the following 645-residue polypeptide: Putative palmitoyltransferase ZDHHC13 (645 aa).

Residues 1-73 (MDWSEGDGSH…KSSHPEDSSS (73 aa)) form a disordered region. Residues 1–314 (MDWSEGDGSH…ACLKLLNRYK (314 aa)) are Cytoplasmic-facing. The segment covering 7–20 (DGSHSHGHMGDSCH) has biased composition (basic and acidic residues). Positions 23-33 (GGGHSHGHGHS) are enriched in basic residues. Residues 34–43 (HGGSGFGGFM) show a composition bias toward gly residues. 5 ANK repeats span residues 104–133 (ENVT…VIDQ), 138–167 (LNST…DPSL), 171–200 (EGYR…EVDL), 204–234 (NGQT…SVNA), and 239–268 (NRNS…SVDM). The chain crosses the membrane as a helical span at residues 315–335 (VCLQSVFSVVVVGAFGAILDM). A topological domain (lumenal) is located at residue Arg336. A helical membrane pass occupies residues 337-357 (TESWLLKGILLACIMAVINLA). At 358–369 (SRQLATVAVRSL) the chain is on the cytoplasmic side. Residues 370–390 (IPSTGLIASVFWMVVTWVLWF) form a helical membrane-spanning segment. Residues 391-394 (LPDE) are Lumenal-facing. The chain crosses the membrane as a helical span at residues 395–415 (PSAAVQMLFTVNITAVLYYYI). The Cytoplasmic portion of the chain corresponds to 416–492 (RSCRTDPGHV…NGCIGARNHP (77 aa)). Residues 449-499 (IFCTSCMMRKPMRANHCFSCNACVAKQDHHSIWINGCIGARNHPFFVLFLV) enclose the DHHC domain. A helical membrane pass occupies residues 493–513 (FFVLFLVALNFLCIWMFYGSI). Residues 514-542 (TYWSRHCPLHYSEEGIWGALTALMGCSPW) lie on the Lumenal side of the membrane. The chain crosses the membrane as a helical span at residues 543-563 (LLYVFCFVFFHTTWASILLVL). Residues 564 to 645 (QLYQIAFLGL…RDMFSSPDAV (82 aa)) lie on the Cytoplasmic side of the membrane.

This sequence belongs to the DHHC palmitoyltransferase family. AKR/ZDHHC17 subfamily.

Its subcellular location is the golgi apparatus membrane. It is found in the cytoplasmic vesicle membrane. Functionally, putative palmitoyltransferase that could catalyze the addition of palmitate onto various protein substrates. The sequence is that of Putative palmitoyltransferase ZDHHC13 from Danio rerio (Zebrafish).